Reading from the N-terminus, the 561-residue chain is Corneodesmosin (561 aa).

The signal sequence occupies residues 1-32 (MGSSRAPRMGSVGGHGLMALLMAGLILPGILA). Disordered regions lie at residues 41–275 (PCKD…HTVS), 415–466 (GSVS…SSSL), and 536–561 (PLGP…LEKS). Residues 61-99 (GSNSISSQGGSSSFSSQGGSSSFSSHGGSSSSQGSSSGS) show a composition bias toward low complexity. Positions 116–127 (GSGGSRPGGSGS) are enriched in gly residues. Composition is skewed to low complexity over residues 128-207 (QSGS…SSGS) and 224-248 (TSGM…PCSS). Over residues 415–430 (GSVSSKGPCSGTRIQI) the composition is skewed to polar residues. Residues 431 to 466 (TSSSSSTSYHPCSGGPSQGPCSSPGTGSISGGSSSL) are compositionally biased toward low complexity.

The protein resides in the secreted. Functionally, important for the epidermal barrier integrity. This chain is Corneodesmosin (Cdsn), found in Mus musculus (Mouse).